Reading from the N-terminus, the 1156-residue chain is Nitric oxide synthase, inducible (1156 aa).

Positions 23-27 (DINNN) match the DINNN-motif; mediates interaction with SPSB1, SPSB2 and SPSB4 motif. Residues 27 to 84 (NVGKFYQPPSSPVTQDDPKRHSPGKHGNESPQPLTGTVKTSPESLSKLDAPPSACPRH) form a disordered region. A compositionally biased stretch (polar residues) spans 55–70 (ESPQPLTGTVKTSPES). Residues Cys110 and Cys115 each contribute to the Zn(2+) site. A (6R)-L-erythro-5,6,7,8-tetrahydrobiopterin-binding site is contributed by Ser118. Cys200 is a binding site for heme b. L-arginine contacts are provided by Gln263, Trp372, Tyr373, and Glu377. 4 residues coordinate (6R)-L-erythro-5,6,7,8-tetrahydrobiopterin: Arg381, Ile462, Trp463, and Phe476. Tyr491 is a heme b binding site. Positions 515 to 535 (FKVLVKAVFFASVLMHKAMAS) are calmodulin-binding. In terms of domain architecture, Flavodoxin-like spans 539 to 677 (ATILFATETG…AFRSWAVQTF (139 aa)). The FMN site is built by Thr545, Glu546, Thr547, Arg549, and Ser550. Position 575 is a phosphotyrosine (Tyr575). 6 residues coordinate FMN: Ser591, Thr592, Ser628, Cys635, Glu661, and Gln665. One can recognise an FAD-binding FR-type domain in the interval 730–970 (KHVFTMRLKS…VRSASGFQLP (241 aa)). Arg750 contributes to the NADP(+) binding site. Positions 772, 906, 908, 909, 924, and 926 each coordinate FAD. Residue Thr929 coordinates NADP(+). The FAD site is built by Tyr930, Val943, Cys944, and Ser945. NADP(+) is bound by residues Thr984, Arg1017, Ser1046, Arg1047, Lys1053, Tyr1055, Gln1057, and Asp1090.

The protein belongs to the NOS family. Homodimer. Interacts with NHERF1. Interacts with GAPDH; induced by oxidatively-modified low-densitity lipoprotein (LDL(ox)). Interacts with S100A8 and S100A9 to form the iNOS-S100A8/9 transnitrosylase complex. Interacts with SPSB1, SPSB2 and SPSB4. Interacts with ELOC and CUL5 in the presence of SPSB1 or SPSB2 or SPSB4. Forms a complex with ASL, ASS1 and HSP90AA1; the complex regulates cell-autonomous L-arginine synthesis and citrulline recycling while channeling extracellular L-arginine to nitric oxide synthesis pathway. It depends on heme b as a cofactor. FAD serves as cofactor. FMN is required as a cofactor. Requires (6R)-L-erythro-5,6,7,8-tetrahydrobiopterin as cofactor. Polyubiquitinated; mediated by SPSB1, SPSB2 and SPSB4, leading to proteasomal degradation.

Its subcellular location is the cytoplasm. It localises to the cytosol. It catalyses the reaction 2 L-arginine + 3 NADPH + 4 O2 + H(+) = 2 L-citrulline + 2 nitric oxide + 3 NADP(+) + 4 H2O. With respect to regulation, regulated by calcium/calmodulin. In terms of biological role, produces nitric oxide (NO) which is a messenger molecule with diverse functions throughout the body. In macrophages, NO mediates tumoricidal and bactericidal actions. Also has nitrosylase activity and mediates cysteine S-nitrosylation of cytoplasmic target proteins such PTGS2/COX2. As component of the iNOS-S100A8/9 transnitrosylase complex involved in the selective inflammatory stimulus-dependent S-nitrosylation of GAPDH implicated in regulation of the GAIT complex activity and probably multiple targets including ANXA5, EZR, MSN and VIM. Involved in inflammation, enhances the synthesis of pro-inflammatory mediators such as IL6 and IL8. This is Nitric oxide synthase, inducible (NOS2) from Bos taurus (Bovine).